The chain runs to 377 residues: Guanine nucleotide-binding protein subunit beta-2 (377 aa).

7 WD repeats span residues 63 to 93 (GHTG…IVWN), 105 to 135 (LPCA…SIFN), 154 to 185 (GHKG…VLWD), 202 to 233 (GHTA…RLWD), 246 to 276 (GHEG…RLFD), 293 to 323 (GDIP…YVWD), and 339 to 369 (SHEG…KIWA).

This sequence belongs to the WD repeat G protein beta family. In terms of assembly, g proteins are composed of 3 units, alpha, beta and gamma.

In terms of biological role, guanine nucleotide-binding proteins (G proteins) are involved as a modulator or transducer in various transmembrane signaling systems. The beta and gamma chains are required for the GTPase activity, for replacement of GDP by GTP, and for G protein-effector interaction. This chain is Guanine nucleotide-binding protein subunit beta-2, found in Nicotiana tabacum (Common tobacco).